The following is a 191-amino-acid chain: DNA-directed RNA polymerase subunit Rpo3 (191 aa).

Belongs to the archaeal Rpo3/eukaryotic RPB3 RNA polymerase subunit family. Part of the RNA polymerase complex. Interacts with Rpo12. Forms an Rpo3-Rpo10-Rpo11-Rpo12 complex upon coexpression.

The protein resides in the cytoplasm. The catalysed reaction is RNA(n) + a ribonucleoside 5'-triphosphate = RNA(n+1) + diphosphate. Its function is as follows. DNA-dependent RNA polymerase (RNAP) catalyzes the transcription of DNA into RNA using the four ribonucleoside triphosphates as substrates. The protein is DNA-directed RNA polymerase subunit Rpo3 of Methanocaldococcus jannaschii (strain ATCC 43067 / DSM 2661 / JAL-1 / JCM 10045 / NBRC 100440) (Methanococcus jannaschii).